The following is a 466-amino-acid chain: MSTLMNIREYNSISMIKGPLMAIEGVTDAAYNELIEVEMPDGSKRRGIVVDSQSGVAIVQVFEGTTGVSPTQSKVRFLGRGLEVKISEEMLGRIFTPLGEPLDNGPQVLSGEKRDINGSPLNPSVREYPEEFIQTGVSAIDGLTSLLRGQKLPIFSGSGLPANQLAAQIAKQATVRGEESNFAVVFAAIGIRYDEALFFRRFFEETGAINRVAMFVTLANDPPSLKILTPKTALTLAEYLAYEKDMHILAILIDMTNYCEALRELSASKEEVPGRGGYPGYMYTDLAVTYERAGKVRGKKGSITQMPILTMPNDDITHPIPDLTGYITEGQIVLDRSLFNKGIYPPINVLASLSRLMRDGIGEGKTRDDHKDLSNQLFAAYARAQDIRGLAAIIGEDSLSDVDRKYLLFAEQFERKFINQGINENRDIETTLDIGWEVISMLPESEISLIRTEYIKKYHPNYRVKK.

It belongs to the ATPase alpha/beta chains family. In terms of assembly, has multiple subunits with at least A(3), B(3), C, D, E, F, H, I and proteolipid K(x).

It is found in the cell membrane. In terms of biological role, component of the A-type ATP synthase that produces ATP from ADP in the presence of a proton gradient across the membrane. The B chain is a regulatory subunit. This chain is A-type ATP synthase subunit B, found in Sulfolobus acidocaldarius (strain ATCC 33909 / DSM 639 / JCM 8929 / NBRC 15157 / NCIMB 11770).